Here is a 557-residue protein sequence, read N- to C-terminus: MGNHKAALTKQVFTFASELYAYGVREVVISPGSRSTPLALAFEAHPNIKTWIHPDERSAAFFAVGLIKGSERPVAILCTSGTAAANYTPAIAESQISRIPLIVLTSDRPHELRSVGAPQAINQVNMFNNYVSYEFDMPIADDSKETINAIYYQMQIASQYLYGPHKGPIHFNLPFRDPLTPDLNATELLTSEMKILPHYQKSIDASALRHILNKKKGLIIVGDMQHQEVDQILTYSTIYDLPILADPLSHLRKFDHPNVICTYDLLFRSGLDLNVDFVIRVGKPVISKKLNQWLKKTDAFQILVQNNDKIDVFPIAPDISYEISANDFFRSLMEDTTINRVSWLEKWQCLEKKGRKEIKCYLEQATDESAFVGELIKKTSEKDALFISNSMPIRDVDNLLLNKNIDVYANRGANGIDGIVSTALGMAVHKRITLLIGDLSFYHDMNGLLMSKLNNIQMNIVLLNNDGGGIFSYLPQKESATDYFERLFGTPTGLDFEYTAKLYQFDFKRFNSVSEFKNATLLSETSTIYELITNREDNFKQHQILYQKLSEMIHDTL.

Belongs to the TPP enzyme family. MenD subfamily. In terms of assembly, homodimer. It depends on Mg(2+) as a cofactor. Requires Mn(2+) as cofactor. Thiamine diphosphate serves as cofactor.

It carries out the reaction isochorismate + 2-oxoglutarate + H(+) = 5-enolpyruvoyl-6-hydroxy-2-succinyl-cyclohex-3-ene-1-carboxylate + CO2. The protein operates within quinol/quinone metabolism; 1,4-dihydroxy-2-naphthoate biosynthesis; 1,4-dihydroxy-2-naphthoate from chorismate: step 2/7. It functions in the pathway quinol/quinone metabolism; menaquinone biosynthesis. Functionally, catalyzes the thiamine diphosphate-dependent decarboxylation of 2-oxoglutarate and the subsequent addition of the resulting succinic semialdehyde-thiamine pyrophosphate anion to isochorismate to yield 2-succinyl-5-enolpyruvyl-6-hydroxy-3-cyclohexene-1-carboxylate (SEPHCHC). In Staphylococcus aureus (strain Mu3 / ATCC 700698), this protein is 2-succinyl-5-enolpyruvyl-6-hydroxy-3-cyclohexene-1-carboxylate synthase.